A 495-amino-acid chain; its full sequence is UDP-N-acetylmuramoyl-L-alanyl-D-glutamate--2,6-diaminopimelate ligase (495 aa).

Residues Leu27, Ser29, and 44–46 (HQA) each bind UDP-N-acetyl-alpha-D-muramoyl-L-alanyl-D-glutamate. 116 to 122 (GTNGKTT) contacts ATP. Residues Asn157, 158–159 (TT), Ser185, Gln191, and Arg193 each bind UDP-N-acetyl-alpha-D-muramoyl-L-alanyl-D-glutamate. Lys225 carries the N6-carboxylysine modification. Meso-2,6-diaminopimelate contacts are provided by residues Arg390, 414–417 (DNPR), Gly465, and Glu469. The short motif at 414 to 417 (DNPR) is the Meso-diaminopimelate recognition motif element.

This sequence belongs to the MurCDEF family. MurE subfamily. Mg(2+) is required as a cofactor. Post-translationally, carboxylation is probably crucial for Mg(2+) binding and, consequently, for the gamma-phosphate positioning of ATP.

It is found in the cytoplasm. The enzyme catalyses UDP-N-acetyl-alpha-D-muramoyl-L-alanyl-D-glutamate + meso-2,6-diaminopimelate + ATP = UDP-N-acetyl-alpha-D-muramoyl-L-alanyl-gamma-D-glutamyl-meso-2,6-diaminopimelate + ADP + phosphate + H(+). Its pathway is cell wall biogenesis; peptidoglycan biosynthesis. Functionally, catalyzes the addition of meso-diaminopimelic acid to the nucleotide precursor UDP-N-acetylmuramoyl-L-alanyl-D-glutamate (UMAG) in the biosynthesis of bacterial cell-wall peptidoglycan. The polypeptide is UDP-N-acetylmuramoyl-L-alanyl-D-glutamate--2,6-diaminopimelate ligase (Escherichia coli O6:H1 (strain CFT073 / ATCC 700928 / UPEC)).